Consider the following 284-residue polypeptide: 4-hydroxy-3-methylbut-2-enyl diphosphate reductase (284 aa).

Position 12 (cysteine 12) interacts with [4Fe-4S] cluster. Histidine 40 and histidine 72 together coordinate (2E)-4-hydroxy-3-methylbut-2-enyl diphosphate. Histidine 40 and histidine 72 together coordinate dimethylallyl diphosphate. Isopentenyl diphosphate-binding residues include histidine 40 and histidine 72. Cysteine 94 contacts [4Fe-4S] cluster. A (2E)-4-hydroxy-3-methylbut-2-enyl diphosphate-binding site is contributed by histidine 122. Histidine 122 contributes to the dimethylallyl diphosphate binding site. Position 122 (histidine 122) interacts with isopentenyl diphosphate. Residue glutamate 124 is the Proton donor of the active site. (2E)-4-hydroxy-3-methylbut-2-enyl diphosphate is bound at residue threonine 161. Cysteine 193 serves as a coordination point for [4Fe-4S] cluster. Positions 221, 223, and 264 each coordinate (2E)-4-hydroxy-3-methylbut-2-enyl diphosphate. 3 residues coordinate dimethylallyl diphosphate: serine 221, asparagine 223, and serine 264. Isopentenyl diphosphate is bound by residues serine 221, asparagine 223, and serine 264.

It belongs to the IspH family. Requires [4Fe-4S] cluster as cofactor.

The enzyme catalyses isopentenyl diphosphate + 2 oxidized [2Fe-2S]-[ferredoxin] + H2O = (2E)-4-hydroxy-3-methylbut-2-enyl diphosphate + 2 reduced [2Fe-2S]-[ferredoxin] + 2 H(+). It catalyses the reaction dimethylallyl diphosphate + 2 oxidized [2Fe-2S]-[ferredoxin] + H2O = (2E)-4-hydroxy-3-methylbut-2-enyl diphosphate + 2 reduced [2Fe-2S]-[ferredoxin] + 2 H(+). Its pathway is isoprenoid biosynthesis; dimethylallyl diphosphate biosynthesis; dimethylallyl diphosphate from (2E)-4-hydroxy-3-methylbutenyl diphosphate: step 1/1. It functions in the pathway isoprenoid biosynthesis; isopentenyl diphosphate biosynthesis via DXP pathway; isopentenyl diphosphate from 1-deoxy-D-xylulose 5-phosphate: step 6/6. Catalyzes the conversion of 1-hydroxy-2-methyl-2-(E)-butenyl 4-diphosphate (HMBPP) into a mixture of isopentenyl diphosphate (IPP) and dimethylallyl diphosphate (DMAPP). Acts in the terminal step of the DOXP/MEP pathway for isoprenoid precursor biosynthesis. In Dehalococcoides mccartyi (strain ATCC BAA-2100 / JCM 16839 / KCTC 5957 / BAV1), this protein is 4-hydroxy-3-methylbut-2-enyl diphosphate reductase.